We begin with the raw amino-acid sequence, 262 residues long: Mitochondrial calcium uniporter regulator 1 (262 aa).

The stretch at 138-175 forms a coiled coil; sequence EKSEFSALRTQNEKVKIELQQLKKQLNDSIVKVRASNK. A helical transmembrane segment spans residues 239-261; the sequence is TIKYLAGSVFTCLTIALGFYRLW.

This sequence belongs to the CCDC90 family.

Its subcellular location is the mitochondrion inner membrane. Functionally, key regulator of mitochondrial calcium uniporter (mcu) required for calcium entry into mitochondrion. In Xenopus tropicalis (Western clawed frog), this protein is Mitochondrial calcium uniporter regulator 1.